Consider the following 276-residue polypeptide: Ribosomal RNA small subunit methyltransferase A (276 aa).

Residues Asn15, Leu17, Gly42, Glu63, Asp88, and Asn111 each contribute to the S-adenosyl-L-methionine site.

The protein belongs to the class I-like SAM-binding methyltransferase superfamily. rRNA adenine N(6)-methyltransferase family. RsmA subfamily.

The protein localises to the cytoplasm. It catalyses the reaction adenosine(1518)/adenosine(1519) in 16S rRNA + 4 S-adenosyl-L-methionine = N(6)-dimethyladenosine(1518)/N(6)-dimethyladenosine(1519) in 16S rRNA + 4 S-adenosyl-L-homocysteine + 4 H(+). In terms of biological role, specifically dimethylates two adjacent adenosines (A1518 and A1519) in the loop of a conserved hairpin near the 3'-end of 16S rRNA in the 30S particle. May play a critical role in biogenesis of 30S subunits. The chain is Ribosomal RNA small subunit methyltransferase A from Geobacter sulfurreducens (strain ATCC 51573 / DSM 12127 / PCA).